A 90-amino-acid chain; its full sequence is Sakacin-A immunity factor (90 aa).

Functionally, imparts immunity to sakacin-A to naturally sensitive host strains. In Latilactobacillus sakei (Lactobacillus sakei), this protein is Sakacin-A immunity factor (saiA).